A 205-amino-acid chain; its full sequence is Small ribosomal subunit protein uS4 (205 aa).

Residues 1–16 are compositionally biased toward basic and acidic residues; that stretch reads MSKRESSKYKIDRRMG. The tract at residues 1–46 is disordered; that stretch reads MSKRESSKYKIDRRMGENIWGRPKSPVNRREYGPGQHGQRRKGKLS. The 64-residue stretch at 94–157 folds into the S4 RNA-binding domain; the sequence is SRLDAIVYRA…KQLVIVLESV (64 aa).

Belongs to the universal ribosomal protein uS4 family. As to quaternary structure, part of the 30S ribosomal subunit. Contacts protein S5. The interaction surface between S4 and S5 is involved in control of translational fidelity.

Functionally, one of the primary rRNA binding proteins, it binds directly to 16S rRNA where it nucleates assembly of the body of the 30S subunit. In terms of biological role, with S5 and S12 plays an important role in translational accuracy. The polypeptide is Small ribosomal subunit protein uS4 (Rhizobium rhizogenes (strain K84 / ATCC BAA-868) (Agrobacterium radiobacter)).